A 603-amino-acid chain; its full sequence is MTMHTTMTTLTLTSLIPPILTTLVNPNKKNSYPHYVKSIVASTFIISLFPTTMFMCLDQEVIISNWHWATTQTTQLSLSFKLDYFSMMFIPVALFVTWSIMEFSLWYMNSDPNINQFFKYLLIFLITMLILVTANNLFQLFIGWEGVGIMSFLLISWWYARADANTAAIQAILYNRIGDIGFILALAWFILHSNSWDPQQMALLNANPSLTPLLGLLLAAAGKSAQLGLHPWLPSAMEGPTPVSALLHSSTMVVAGIFLLIRFHPLAENSPLIQTLTLCLGAITTLFAAVCALTQNDIKKIVAFSTSSQLGLMMVTIGINQPHLAFLHICTHAFFKAMLFMCSGSIIHNLNNEQDIRKMGGLLKTMPLTSTSLTIGSLALAGMPFLTGFYSKDHIIETANMSYTNAWALSITLIATSLTSAYSTRMILLTLTGQPRFPTLTNINENNPTLLNPIKRLAAGSLFAGFLITNNISPASPFQTTIPLYLKLTALAVTFLGLLTALDLNYLTNKLKMKSPLCTFYFSNMLGFYPSITHRTIPYLGLLTSQNLPLLLLDLTWLEKLLPKTISQHQISTSIITSTQKGMIKLYFLSFFFPLILTLLLIT.

15 helical membrane passes run 38–58 (SIVASTFIISLFPTTMFMCLD), 87–107 (MMFIPVALFVTWSIMEFSLWY), 122–142 (LIFLITMLILVTANNLFQLFI), 144–160 (WEGVGIMSFLLISWWYA), 171–191 (AILYNRIGDIGFILALAWFIL), 211–233 (TPLLGLLLAAAGKSAQLGLHPWL), 241–261 (TPVSALLHSSTMVVAGIFLLI), 272–292 (LIQTLTLCLGAITTLFAAVCA), 301–320 (IVAFSTSSQLGLMMVTIGIN), 325–347 (AFLHICTHAFFKAMLFMCSGSII), 370–390 (STSLTIGSLALAGMPFLTGFY), 407–429 (WALSITLIATSLTSAYSTRMILL), 458–478 (AAGSLFAGFLITNNISPASPF), 482–502 (IPLYLKLTALAVTFLGLLTAL), and 582–602 (GMIKLYFLSFFFPLILTLLLI).

It belongs to the complex I subunit 5 family. In terms of assembly, core subunit of respiratory chain NADH dehydrogenase (Complex I) which is composed of 45 different subunits.

The protein resides in the mitochondrion inner membrane. It catalyses the reaction a ubiquinone + NADH + 5 H(+)(in) = a ubiquinol + NAD(+) + 4 H(+)(out). Its function is as follows. Core subunit of the mitochondrial membrane respiratory chain NADH dehydrogenase (Complex I) which catalyzes electron transfer from NADH through the respiratory chain, using ubiquinone as an electron acceptor. Essential for the catalytic activity and assembly of complex I. This Homo sapiens (Human) protein is NADH-ubiquinone oxidoreductase chain 5 (MT-ND5).